The following is a 535-amino-acid chain: Ribonuclease Y (535 aa).

The chain crosses the membrane as a helical span at residues 4–24; the sequence is IILAMVCALIGLIIGYVAISM. The segment at 107-145 is disordered; the sequence is TDRASSLDRKDENLSNKEKMLDSKEQSLTDKSRHINERE. The region spanning 225-285 is the KH domain; that stretch reads TITTVHLPDD…IRREIARMTL (61 aa). The 94-residue stretch at 351–444 folds into the HD domain; the sequence is VLRHSVEVGK…VAAADALSSA (94 aa).

It belongs to the RNase Y family.

It localises to the cell membrane. Its function is as follows. Endoribonuclease that initiates mRNA decay. This is Ribonuclease Y from Streptococcus agalactiae serotype Ia (strain ATCC 27591 / A909 / CDC SS700).